We begin with the raw amino-acid sequence, 1032 residues long: UPF0182 protein sll1060 (1032 aa).

The next 9 helical transmembrane spans lie at 27–49 (WVKG…RIYV), 69–87 (WQGS…FIVF), 144–166 (VLLP…YVFI), 197–219 (FSGM…IGVL), 226–248 (PGLV…FRLL), 283–300 (WWRG…LIIL), 321–339 (HISA…EHWL), 364–386 (LPVE…WLSV), and 406–428 (IIGL…LGGW).

It belongs to the UPF0182 family.

It is found in the cell membrane. The chain is UPF0182 protein sll1060 from Synechocystis sp. (strain ATCC 27184 / PCC 6803 / Kazusa).